The sequence spans 296 residues: Formamidopyrimidine-DNA glycosylase (296 aa).

Residue P2 is the Schiff-base intermediate with DNA of the active site. The Proton donor role is filled by E3. K61 (proton donor; for beta-elimination activity) is an active-site residue. The DNA site is built by H104, R123, and K169. An FPG-type zinc finger spans residues 255-289 (DAYGREGEPCRRCGAIMRREKFMNRSSFYCPRCQP). R279 functions as the Proton donor; for delta-elimination activity in the catalytic mechanism.

This sequence belongs to the FPG family. Monomer. Zn(2+) is required as a cofactor.

The enzyme catalyses Hydrolysis of DNA containing ring-opened 7-methylguanine residues, releasing 2,6-diamino-4-hydroxy-5-(N-methyl)formamidopyrimidine.. It catalyses the reaction 2'-deoxyribonucleotide-(2'-deoxyribose 5'-phosphate)-2'-deoxyribonucleotide-DNA = a 3'-end 2'-deoxyribonucleotide-(2,3-dehydro-2,3-deoxyribose 5'-phosphate)-DNA + a 5'-end 5'-phospho-2'-deoxyribonucleoside-DNA + H(+). Functionally, involved in base excision repair of DNA damaged by oxidation or by mutagenic agents. Acts as a DNA glycosylase that recognizes and removes damaged bases. Has a preference for oxidized purines, such as 7,8-dihydro-8-oxoguanine (8-oxoG). Has AP (apurinic/apyrimidinic) lyase activity and introduces nicks in the DNA strand. Cleaves the DNA backbone by beta-delta elimination to generate a single-strand break at the site of the removed base with both 3'- and 5'-phosphates. This chain is Formamidopyrimidine-DNA glycosylase, found in Mycobacterium sp. (strain JLS).